A 247-amino-acid polypeptide reads, in one-letter code: MVDKIMNSTANLLFDFAEVSVGQHYYWQIGEYSVHGQVLMTSWFVFAVIAILSIAGNRDLKAIPEGLQNLTEYITEFIRDLAKTQIGEEEYVKWIPFLGTLFLFIFVSNWSGALIPWHIFEIPNGELAAPTNDINTTVALALLTSTAYFYAGFSKKGLGYFKRYVSPAAFLLPINVLEDFTKPLSLSFRLFGNILADELVVGVLVALVPLVVPIPIMLLGLFTSGIQALVFATLAGAYIGESIEDHH.

The next 5 helical transmembrane spans lie at 36–56 (GQVL…SIAG), 95–115 (IPFL…GALI), 134–154 (INTT…AGFS), 199–219 (LVVG…IMLL), and 220–240 (GLFT…AYIG).

This sequence belongs to the ATPase A chain family. In terms of assembly, F-type ATPases have 2 components, CF(1) - the catalytic core - and CF(0) - the membrane proton channel. CF(1) has five subunits: alpha(3), beta(3), gamma(1), delta(1), epsilon(1). CF(0) has four main subunits: a, b, b' and c.

The protein resides in the plastid. It localises to the chloroplast thylakoid membrane. Functionally, key component of the proton channel; it plays a direct role in the translocation of protons across the membrane. In Tupiella akineta (Green alga), this protein is ATP synthase subunit a, chloroplastic.